A 356-amino-acid polypeptide reads, in one-letter code: Photosystem II protein D1 (356 aa).

3 helical membrane-spanning segments follow: residues 29-46 (YVGW…TATT), 118-133 (HFLI…QWEL), and 142-156 (WICV…AATA). H118 contributes to the chlorophyll a binding site. Y126 provides a ligand contact to pheophytin a. [CaMn4O5] cluster contacts are provided by D170 and E189. Residues 197 to 218 (FHMLGVAGVFGGSLFSAMHGSL) form a helical membrane-spanning segment. H198 provides a ligand contact to chlorophyll a. A quinone is bound by residues H215 and 264-265 (SF). H215 is a Fe cation binding site. H272 serves as a coordination point for Fe cation. A helical membrane pass occupies residues 274-288 (FLGAWPVIGIWFTAM). Positions 332, 333, 342, and 344 each coordinate [CaMn4O5] cluster. A propeptide spanning residues 345–356 (SAEPVSAPVING) is cleaved from the precursor.

This sequence belongs to the reaction center PufL/M/PsbA/D family. In terms of assembly, PSII is composed of 1 copy each of membrane proteins PsbA, PsbB, PsbC, PsbD, PsbE, PsbF, PsbH, PsbI, PsbJ, PsbK, PsbL, PsbM, PsbT, PsbX, PsbY, PsbZ, Psb30/Ycf12, peripheral proteins PsbO, CyanoQ (PsbQ), PsbU, PsbV and a large number of cofactors. It forms dimeric complexes. It depends on The D1/D2 heterodimer binds P680, chlorophylls that are the primary electron donor of PSII, and subsequent electron acceptors. It shares a non-heme iron and each subunit binds pheophytin, quinone, additional chlorophylls, carotenoids and lipids. D1 provides most of the ligands for the Mn4-Ca-O5 cluster of the oxygen-evolving complex (OEC). There is also a Cl(-1) ion associated with D1 and D2, which is required for oxygen evolution. The PSII complex binds additional chlorophylls, carotenoids and specific lipids. as a cofactor. In terms of processing, tyr-161 forms a radical intermediate that is referred to as redox-active TyrZ, YZ or Y-Z. Post-translationally, C-terminally processed by CtpA; processing is essential to allow assembly of the oxygen-evolving complex and thus photosynthetic growth.

The protein localises to the cellular thylakoid membrane. The catalysed reaction is 2 a plastoquinone + 4 hnu + 2 H2O = 2 a plastoquinol + O2. Its function is as follows. Photosystem II (PSII) is a light-driven water:plastoquinone oxidoreductase that uses light energy to abstract electrons from H(2)O, generating O(2) and a proton gradient subsequently used for ATP formation. It consists of a core antenna complex that captures photons, and an electron transfer chain that converts photonic excitation into a charge separation. The D1/D2 (PsbA/PsbD) reaction center heterodimer binds P680, the primary electron donor of PSII as well as several subsequent electron acceptors. This is Photosystem II protein D1 from Crocosphaera subtropica (strain ATCC 51142 / BH68) (Cyanothece sp. (strain ATCC 51142)).